Consider the following 206-residue polypeptide: 2-oxoglutarate-dependent dioxygenase iboH (206 aa).

The region spanning P51 to P157 is the Fe2OG dioxygenase domain. Positions 75, 77, and 134 each coordinate Fe cation. R148 provides a ligand contact to 2-oxoglutarate.

This sequence belongs to the iron/ascorbate-dependent oxidoreductase family. The cofactor is Fe(2+).

The enzyme catalyses L-glutamate + 2-oxoglutarate + O2 = (3R)-3-hydroxy-L-glutamate + succinate + CO2. The protein operates within secondary metabolite biosynthesis. Functionally, 2-oxoglutarate-dependent dioxygenase; part of the gene cluster that mediates the biosynthesis of the psychoactive metabolites ibotenic acid and muscimol. The first committed step is glutamate hydroxylation by the 2-oxoglutarate-dependent dioxygenase iboH, and the last step is decarboxylation of ibotenic acid to muscimol by the decarboxylase iboD. The order of the intermediate reactions is somewhat ambiguous. IboA likely activates the carboxylic acid at position 5 to introduce an amide bond, and the flavin monooxygenase iboF generates the N-O bond. There are several options for the latter step. One option is that iboF directly hydroxylates the amide nitrogen formed by iboA to produce a hydroxamic acid species. Another option is that iboF hydroxylates an external N-containing compound, whose resulting N-O bond is subsequently introduced into the hydroxyglutamate scaffold. The paralogous PLP-dependent cystathionine gamma-synthase-like enzymes iboG1 and iboG2 are likely involved in substitution of the OH group at position 3 by the O-N moiety. The first cyclic intermediate is most probably tricholomic acid which is likely desaturated to ibotenic acid by the cytochrome P450 monooxygenase iboC. This chain is 2-oxoglutarate-dependent dioxygenase iboH, found in Amanita muscaria (strain Koide BX008).